A 282-amino-acid chain; its full sequence is UDP-N-acetylenolpyruvoylglucosamine reductase (282 aa).

Residues 15–179 enclose the FAD-binding PCMH-type domain; the sequence is IKSFAKYVYF…LSAEFEFEYK (165 aa). Arginine 157 is an active-site residue. The active-site Proton donor is serine 207. Glutamate 278 is an active-site residue.

The protein belongs to the MurB family. Requires FAD as cofactor.

It localises to the cytoplasm. It catalyses the reaction UDP-N-acetyl-alpha-D-muramate + NADP(+) = UDP-N-acetyl-3-O-(1-carboxyvinyl)-alpha-D-glucosamine + NADPH + H(+). The protein operates within cell wall biogenesis; peptidoglycan biosynthesis. Its function is as follows. Cell wall formation. The protein is UDP-N-acetylenolpyruvoylglucosamine reductase of Francisella tularensis subsp. tularensis (strain SCHU S4 / Schu 4).